Here is a 542-residue protein sequence, read N- to C-terminus: Protein MGF 505-11L (542 aa).

The protein belongs to the asfivirus MGF 505 family.

In terms of biological role, plays a role in virus cell tropism, and may be required for efficient virus replication in macrophages. The sequence is that of Protein MGF 505-11L from African swine fever virus (isolate Pig/Kenya/KEN-50/1950) (ASFV).